A 344-amino-acid polypeptide reads, in one-letter code: Anamorsin homolog 1 (344 aa).

The tract at residues 1–169 is N-terminal SAM-like domain; it reads MANNVGVLLA…DTGSVFQIRK (169 aa). A linker region spans residues 170–233; it reads KVSNQNGNFR…EDDLLTEEDL (64 aa). [2Fe-2S] cluster contacts are provided by Cys-244, Cys-251, Cys-254, and Cys-256. The interval 244-256 is fe-S binding site A; the sequence is CAPTKKACKNCTC. The [4Fe-4S] cluster site is built by Cys-282, Cys-285, Cys-293, and Cys-296. Short sequence motifs (cx2C motif) lie at residues 282 to 285 and 293 to 296; these read CGSC and CAGC. A fe-S binding site B region spans residues 282–296; sequence CGSCGLGDAFRCAGC.

Belongs to the anamorsin family. As to quaternary structure, monomer. The cofactor is [2Fe-2S] cluster. It depends on [4Fe-4S] cluster as a cofactor.

It is found in the cytoplasm. The protein resides in the mitochondrion intermembrane space. In terms of biological role, component of the cytosolic iron-sulfur (Fe-S) protein assembly (CIA) machinery. Required for the maturation of extramitochondrial Fe-S proteins. Part of an electron transfer chain functioning in an early step of cytosolic Fe-S biogenesis, facilitating the de novo assembly of a [4Fe-4S] cluster on the cytosolic Fe-S scaffold complex. Electrons are transferred from NADPH via a FAD- and FMN-containing diflavin oxidoreductase. Together with the diflavin oxidoreductase, also required for the assembly of the diferric tyrosyl radical cofactor of ribonucleotide reductase (RNR), probably by providing electrons for reduction during radical cofactor maturation in the catalytic small subunit. The polypeptide is Anamorsin homolog 1 (Physcomitrium patens (Spreading-leaved earth moss)).